The chain runs to 364 residues: Mannose-1-phosphate guanyltransferase (364 aa).

Belongs to the transferase hexapeptide repeat family.

Its subcellular location is the cytoplasm. It carries out the reaction alpha-D-mannose 1-phosphate + GTP + H(+) = GDP-alpha-D-mannose + diphosphate. It participates in nucleotide-sugar biosynthesis; GDP-alpha-D-mannose biosynthesis; GDP-alpha-D-mannose from alpha-D-mannose 1-phosphate (GTP route): step 1/1. Its function is as follows. Involved in cell wall synthesis where it is required for glycosylation. Involved in cell cycle progression through cell-size checkpoint. This is Mannose-1-phosphate guanyltransferase (MPG1) from Pichia angusta (Yeast).